A 215-amino-acid chain; its full sequence is Ceramide-1-phosphate transfer protein (215 aa).

The an N-acylsphingoid base 1-phosphate site is built by aspartate 57, lysine 61, arginine 107, arginine 111, and histidine 151.

It belongs to the GLTP family.

Its subcellular location is the cytoplasm. The protein localises to the cytosol. It is found in the golgi apparatus. It localises to the trans-Golgi network membrane. The protein resides in the cell membrane. Its subcellular location is the endosome membrane. The protein localises to the nucleus outer membrane. The enzyme catalyses N-(hexadecanoyl)-sphing-4-enine-1-phosphate(in) = N-(hexadecanoyl)-sphing-4-enine-1-phosphate(out). The catalysed reaction is N-(9Z-octadecenoyl)-sphing-4-enine-1-phosphate(in) = N-(9Z-octadecenoyl)-sphing-4-enine-1-phosphate(out). In terms of biological role, mediates the intracellular transfer of ceramide-1-phosphate (C1P) between organelle membranes and the cell membrane. Required for normal structure of the Golgi stacks. Can bind phosphoceramides with a variety of aliphatic chains, but has a preference for lipids with saturated C16:0 or monounsaturated C18:1 aliphatic chains, and is inefficient with phosphoceramides containing lignoceryl (C24:0). Plays a role in the regulation of the cellular levels of ceramide-1-phosphate, and thereby contributes to the regulation of phospholipase PLA2G4A activity and the release of arachidonic acid. Has no activity with galactosylceramide, lactosylceramide, sphingomyelin, phosphatidylcholine, phosphatidic acid and ceramide. C1P transfer is stimulated by phosphatidylserine in C1P source vesicles. Regulates autophagy and pyroptosis, but not apoptosis. The polypeptide is Ceramide-1-phosphate transfer protein (cptp) (Xenopus laevis (African clawed frog)).